We begin with the raw amino-acid sequence, 631 residues long: tRNA uridine 5-carboxymethylaminomethyl modification enzyme MnmG (631 aa).

Residues 15–20, valine 127, and serine 182 contribute to the FAD site; that span reads GGGHAG. 275–289 contributes to the NAD(+) binding site; the sequence is GPRYCPSIEDKIVRF. Residue glutamine 372 participates in FAD binding.

The protein belongs to the MnmG family. Homodimer. Heterotetramer of two MnmE and two MnmG subunits. FAD serves as cofactor.

Its subcellular location is the cytoplasm. NAD-binding protein involved in the addition of a carboxymethylaminomethyl (cmnm) group at the wobble position (U34) of certain tRNAs, forming tRNA-cmnm(5)s(2)U34. This Buchnera aphidicola subsp. Schizaphis graminum (strain Sg) protein is tRNA uridine 5-carboxymethylaminomethyl modification enzyme MnmG.